Here is a 524-residue protein sequence, read N- to C-terminus: Peptide chain release factor 3 (524 aa).

Positions alanine 11–glycine 278 constitute a tr-type G domain. GTP-binding positions include serine 20 to threonine 27, aspartate 88 to histidine 92, and asparagine 142 to aspartate 145.

It belongs to the TRAFAC class translation factor GTPase superfamily. Classic translation factor GTPase family. PrfC subfamily.

It localises to the cytoplasm. In terms of biological role, increases the formation of ribosomal termination complexes and stimulates activities of RF-1 and RF-2. It binds guanine nucleotides and has strong preference for UGA stop codons. It may interact directly with the ribosome. The stimulation of RF-1 and RF-2 is significantly reduced by GTP and GDP, but not by GMP. The sequence is that of Peptide chain release factor 3 from Lacticaseibacillus paracasei (strain ATCC 334 / BCRC 17002 / CCUG 31169 / CIP 107868 / KCTC 3260 / NRRL B-441) (Lactobacillus paracasei).